A 324-amino-acid polypeptide reads, in one-letter code: Lactonase drp35 (324 aa).

Positions 47, 109, 111, 129, 132, 134, 137, 184, 235, and 236 each coordinate Ca(2+). Residue D235 is the Proton donor of the active site.

It belongs to the SMP-30/CGR1 family. Ca(2+) is required as a cofactor.

It localises to the cytoplasm. Functionally, exhibits lactonase activity. Acts in cells with perturbed membrane integrity and is possibly related to the membrane homeostasis. The sequence is that of Lactonase drp35 (drp35) from Staphylococcus aureus (strain bovine RF122 / ET3-1).